The sequence spans 162 residues: Putative 4-hydroxy-4-methyl-2-oxoglutarate aldolase (162 aa).

Substrate is bound by residues 75–78 and arginine 97; that span reads GDML. An a divalent metal cation-binding site is contributed by aspartate 98.

It belongs to the class II aldolase/RraA-like family. Homotrimer. A divalent metal cation is required as a cofactor.

It carries out the reaction 4-hydroxy-4-methyl-2-oxoglutarate = 2 pyruvate. The enzyme catalyses oxaloacetate + H(+) = pyruvate + CO2. Catalyzes the aldol cleavage of 4-hydroxy-4-methyl-2-oxoglutarate (HMG) into 2 molecules of pyruvate. Also contains a secondary oxaloacetate (OAA) decarboxylase activity due to the common pyruvate enolate transition state formed following C-C bond cleavage in the retro-aldol and decarboxylation reactions. This Pseudomonas aeruginosa (strain LESB58) protein is Putative 4-hydroxy-4-methyl-2-oxoglutarate aldolase.